The primary structure comprises 320 residues: Carbonic anhydrase 6 (320 aa).

The signal sequence occupies residues 1-17 (MRALALLLALPLLGARA). The 258-residue stretch at 21–278 (SLWTYSEGAL…LNGRVVESNF (258 aa)) folds into the Alpha-carbonic anhydrase domain. A disulfide bond links cysteine 42 and cysteine 224. Histidine 85 functions as the Proton donor/acceptor in the catalytic mechanism. Zn(2+) is bound by residues histidine 111, histidine 113, and histidine 138. 220 to 221 (TT) serves as a coordination point for substrate. Asparagine 256 is a glycosylation site (N-linked (GlcNAc...) asparagine).

It belongs to the alpha-carbonic anhydrase family. It depends on Zn(2+) as a cofactor.

The protein localises to the secreted. The catalysed reaction is hydrogencarbonate + H(+) = CO2 + H2O. Its function is as follows. Reversible hydration of carbon dioxide. Its role in saliva is unknown. The chain is Carbonic anhydrase 6 (CA6) from Canis lupus familiaris (Dog).